A 316-amino-acid chain; its full sequence is Ribosomal protein L11 methyltransferase (316 aa).

S-adenosyl-L-methionine is bound by residues Thr160, Gly181, Asp203, and Asn246.

This sequence belongs to the methyltransferase superfamily. PrmA family.

Its subcellular location is the cytoplasm. It carries out the reaction L-lysyl-[protein] + 3 S-adenosyl-L-methionine = N(6),N(6),N(6)-trimethyl-L-lysyl-[protein] + 3 S-adenosyl-L-homocysteine + 3 H(+). Methylates ribosomal protein L11. The polypeptide is Ribosomal protein L11 methyltransferase (Heliobacterium modesticaldum (strain ATCC 51547 / Ice1)).